A 166-amino-acid polypeptide reads, in one-letter code: Ubiquitin-conjugating enzyme E2-18 kDa (166 aa).

The region spanning 5–165 (MALRRLMKEY…VRRLARKTLG (161 aa)) is the UBC core domain. The Glycyl thioester intermediate role is filled by Cys90. Residue Cys90 forms a Glycyl cysteine thioester (Cys-Gly) (interchain with G-Cter in ubiquitin) linkage.

Belongs to the ubiquitin-conjugating enzyme family. Post-translationally, autoubiquitinated at Cys-90; undergoes 'Lys-48'-linked polyubiquitination, which leads to proteasome-dependent protein degradation.

The catalysed reaction is S-ubiquitinyl-[E1 ubiquitin-activating enzyme]-L-cysteine + [E2 ubiquitin-conjugating enzyme]-L-cysteine = [E1 ubiquitin-activating enzyme]-L-cysteine + S-ubiquitinyl-[E2 ubiquitin-conjugating enzyme]-L-cysteine.. Its pathway is protein modification; protein ubiquitination. Its function is as follows. Catalyzes the covalent attachment of ubiquitin to other proteins. Functions in degradation of misfolded or regulated proteins localized in the endoplasmic reticulum (ER) lumen or membrane via the ubiquitin-proteasome system. Cognate E2 conjugating enzyme for the doa10 ubiquitin ligase complex, which is part of the ERAD-C pathway responsible for the rapid degradation of membrane proteins with misfolded cytoplasmic domains, and of the hrd1 ubiquitin ligase complex, which is part of the ERAD-L and ERAD-M pathways responsible for the rapid degradation of soluble lumenal and membrane proteins with misfolded lumenal domains (ERAD-L), or ER-membrane proteins with misfolded transmembrane domains (ERAD-M). Together with hrd1, required for the degradation of the transcription factor sre1 precursor in the absence of its binding partner scp1. Has a role in the formation of chromatin structures that influence the localization of transcriptional silencing factors. In Schizosaccharomyces pombe (strain 972 / ATCC 24843) (Fission yeast), this protein is Ubiquitin-conjugating enzyme E2-18 kDa (ubc7).